Reading from the N-terminus, the 107-residue chain is Anti-adapter protein IraM (107 aa).

It belongs to the IraM/RssC family.

It is found in the cytoplasm. Inhibits RpoS proteolysis by regulating RssB activity, thereby increasing the stability of the sigma stress factor RpoS during magnesium starvation. The sequence is that of Anti-adapter protein IraM from Shigella sonnei (strain Ss046).